Consider the following 140-residue polypeptide: Pre-mRNA-splicing factor NTC20 (140 aa).

Ser-139 is modified (phosphoserine).

As to quaternary structure, belongs to the NTC complex (or PRP19-associated complex), composed of at least CEF1, CLF1, ISY1, NTC20, SNT309, SYF1, SYF2, and PRP19. The NTC complex associates with the spliceosome after the release of the U1 and U4 snRNAs and forms the CWC spliceosome subcomplex (or CEF1-associated complex) reminiscent of a late-stage spliceosome composed also of the U2, U5 and U6 snRNAs and at least BUD13, BRR2, CDC40, CUS1, CWC2, CWC15, CWC21, CWC22, CWC23, CWC24, CWC25, CWC27, ECM2, HSH155, IST3, LEA1, MSL1, PRP8, PRP9, PRP11, PRP21, PRP22, PRP45, PRP46, SLU7, SMB1, SMD1, SMD2, SMD3, SMX2, SMX3, SNU114, SPP2, RSE1 and YJU2. Interacts with CEF1, CLF1, ISY1, PRP46, and SYF1.

It localises to the nucleus. In terms of biological role, involved in pre-mRNA splicing. As a component of the NTC complex, associates to the spliceosome to mediate conformational rearrangement or to stabilize the structure of the spliceosome after U4 snRNA dissociation, which leads to spliceosome maturation. In Saccharomyces cerevisiae (strain ATCC 204508 / S288c) (Baker's yeast), this protein is Pre-mRNA-splicing factor NTC20 (NTC20).